Consider the following 458-residue polypeptide: Hyaluronidase conohyal-P1 (458 aa).

The N-terminal stretch at 1–18 (MRVVVVVTGLVVVVVATA) is a signal peptide. The disordered stretch occupies residues 24–47 (HDVKSASSPLSSSSVYQGSSGDDC). Over residues 28 to 43 (SASSPLSSSSVYQGSS) the composition is skewed to low complexity. Cysteine 68 and cysteine 342 are disulfide-bonded. N-linked (GlcNAc...) asparagine glycosylation is found at asparagine 106 and asparagine 141. The active-site Proton donor is glutamate 151. 3 N-linked (GlcNAc...) asparagine glycosylation sites follow: asparagine 261, asparagine 337, and asparagine 359. Residues 363 to 434 (VMADCSTTLC…VRPSRCHKQQ (72 aa)) enclose the EGF-like domain. Disulfide bonds link cysteine 367/cysteine 378, cysteine 372/cysteine 411, and cysteine 413/cysteine 422.

Belongs to the glycosyl hydrolase 56 family. In terms of tissue distribution, expressed by the venom duct.

The protein localises to the secreted. It carries out the reaction Random hydrolysis of (1-&gt;4)-linkages between N-acetyl-beta-D-glucosamine and D-glucuronate residues in hyaluronate.. Hyaluronidase catalyzes the hydrolysis of hyaluronic acid (HA), an anionic, nonsulfated glycosaminoglycan distributed widely throughout connective, epithelial, and neural tissues. In venom, they are known to enhance diffusion of the venom by degrading the extracellular matrix. The chain is Hyaluronidase conohyal-P1 from Conus purpurascens (Purple cone).